The following is a 228-amino-acid chain: uncharacterized protein (228 aa).

Residues 77–79, G113, V133, and 140–142 each bind S-adenosyl-L-methionine; these read TTA and PSL.

The protein belongs to the class IV-like SAM-binding methyltransferase superfamily. RNA methyltransferase TrmH family.

This is an uncharacterized protein from Escherichia coli (strain K12).